A 177-amino-acid chain; its full sequence is Inner membrane-spanning protein YciB (177 aa).

The next 5 helical transmembrane spans lie at 23–43 (MFVATGVAIAATAVMVAWAWF), 50–70 (TMQWISLGLIVVLGGATLLLH), 73–93 (HFIMWKPTVLYWVMGAGLLIS), 119–139 (LTWAWSGFFAFMGALNLFVAY), and 149–169 (FKLFGGMGLMLLFVIAQSLFL).

This sequence belongs to the YciB family.

It localises to the cell inner membrane. Its function is as follows. Plays a role in cell envelope biogenesis, maintenance of cell envelope integrity and membrane homeostasis. In Chromobacterium violaceum (strain ATCC 12472 / DSM 30191 / JCM 1249 / CCUG 213 / NBRC 12614 / NCIMB 9131 / NCTC 9757 / MK), this protein is Inner membrane-spanning protein YciB.